Reading from the N-terminus, the 512-residue chain is Methionine--tRNA ligase (512 aa).

The 'HIGH' region signature appears at 11 to 21 (YYASGKPHIGH). The Zn(2+) site is built by Cys-126, Cys-129, Cys-143, and His-147. Positions 301–305 (KMSKS) match the 'KMSKS' region motif. Lys-304 contributes to the ATP binding site.

Belongs to the class-I aminoacyl-tRNA synthetase family. MetG type 2A subfamily. As to quaternary structure, monomer. Zn(2+) is required as a cofactor.

It localises to the cytoplasm. It carries out the reaction tRNA(Met) + L-methionine + ATP = L-methionyl-tRNA(Met) + AMP + diphosphate. In terms of biological role, is required not only for elongation of protein synthesis but also for the initiation of all mRNA translation through initiator tRNA(fMet) aminoacylation. The polypeptide is Methionine--tRNA ligase (metG) (Mycoplasma genitalium (strain ATCC 33530 / DSM 19775 / NCTC 10195 / G37) (Mycoplasmoides genitalium)).